The following is a 463-amino-acid chain: Elongation factor 1-alpha (463 aa).

The 238-residue stretch at 5-242 folds into the tr-type G domain; sequence KVHINIVVIG…DSIIPPQRPT (238 aa). A G1 region spans residues 14 to 21; it reads GHVDSGKS. 14–21 provides a ligand contact to GTP; the sequence is GHVDSGKS. Residues 70-74 form a G2 region; the sequence is GITID. A G3 region spans residues 91–94; that stretch reads DAPG. Residues 91–95 and 153–156 contribute to the GTP site; these read DAPGH and NKMD. Positions 153 to 156 are G4; it reads NKMD. The interval 194-196 is G5; it reads SGF. 5-glutamyl glycerylphosphorylethanolamine occurs at positions 301 and 374. Positions 443 to 463 are disordered; that stretch reads KSDGSSGKVTKSAQKAAPKKK. Residues 446–455 show a composition bias toward polar residues; that stretch reads GSSGKVTKSA.

It belongs to the TRAFAC class translation factor GTPase superfamily. Classic translation factor GTPase family. EF-Tu/EF-1A subfamily.

Its subcellular location is the cytoplasm. In terms of biological role, this protein promotes the GTP-dependent binding of aminoacyl-tRNA to the A-site of ribosomes during protein biosynthesis. The polypeptide is Elongation factor 1-alpha (Caenorhabditis elegans).